The chain runs to 393 residues: Calreticulin (393 aa).

Residues 1–16 (MLSILLTLLLSKYALG) form the signal peptide. A glycan (N-linked (GlcNAc...) asparagine) is linked at asparagine 27. Cysteine 103 and cysteine 135 are oxidised to a cystine. An alpha-D-glucoside contacts are provided by tyrosine 107, lysine 109, tyrosine 126, and aspartate 133. A run of 7 repeats spans residues 189–200 (VEEGSLEDDWDM), 208–219 (DPNDKKPDDWVD), 225–236 (DPDDKKPDNWDQ), 242–253 (DMDAKKPDDWDD), 257–267 (GEWERPQKDNP), 271–281 (GEWTPRRIDNP), and 285–295 (GEWKPVQIDNP). The interval 189–253 (VEEGSLEDDW…DAKKPDDWDD (65 aa)) is 4 X 12 AA approximate repeats. The tract at residues 194–277 (LEDDWDMLPP…EYKGEWTPRR (84 aa)) is disordered. The segment covering 202-216 (PPKKIDDPNDKKPDD) has biased composition (basic and acidic residues). Acidic residues predominate over residues 217 to 226 (WVDEQFIDDP). Basic and acidic residues-rich tracts occupy residues 227 to 249 (DDKK…KKPD) and 258 to 277 (EWER…TPRR). The interval 257-295 (GEWERPQKDNPEYKGEWTPRRIDNPKYKGEWKPVQIDNP) is 3 X 11 AA approximate repeats. Residue aspartate 315 participates in an alpha-D-glucoside binding. A disordered region spans residues 351–393 (AEVAKEQSSAKDDKEEAEETKERKELPYDAKASDEPSGDHDEL). The Prevents secretion from ER motif lies at 390-393 (HDEL).

Belongs to the calreticulin family.

It localises to the endoplasmic reticulum lumen. Molecular calcium-binding chaperone promoting folding, oligomeric assembly and quality control in the ER via the calreticulin/calnexin cycle. This lectin may interact transiently with almost all of the monoglucosylated glycoproteins that are synthesized in the ER. This is Calreticulin from Schistosoma mansoni (Blood fluke).